Reading from the N-terminus, the 272-residue chain is MRPAELIRFKQSGRAITMLTAWDALSAALVEEAGADVVLVGDSLAMVVLGHATTLPVTLEHMLHHTQAVCRGMSKPLAQQPLVVCDLPFLSYQCGLDRAVAAAGTILKESDAAAIKLEGGEPEIVAVVDRLVRMGIPVMGHLGLTPQAVHRLGYRRQGIDPRSQDKLHRQAQALQDAGCFSLVVEHVPSELAGRLRRTLSIPVIGIGAGPDCDGQVSVTADLLGLTPSQPPFTPARMQGRELSINALKSWLKEQRDQRATPTTPPPPPAPDC.

Mg(2+)-binding residues include D42 and D86. 3-methyl-2-oxobutanoate contacts are provided by residues 42–43 (DS), D86, and K116. E118 contacts Mg(2+). Residue E185 is the Proton acceptor of the active site. The disordered stretch occupies residues 251–272 (LKEQRDQRATPTTPPPPPAPDC). Over residues 262–272 (TTPPPPPAPDC) the composition is skewed to pro residues.

The protein belongs to the PanB family. In terms of assembly, homodecamer; pentamer of dimers. The cofactor is Mg(2+).

The protein localises to the cytoplasm. It catalyses the reaction 3-methyl-2-oxobutanoate + (6R)-5,10-methylene-5,6,7,8-tetrahydrofolate + H2O = 2-dehydropantoate + (6S)-5,6,7,8-tetrahydrofolate. Its pathway is cofactor biosynthesis; (R)-pantothenate biosynthesis; (R)-pantoate from 3-methyl-2-oxobutanoate: step 1/2. Functionally, catalyzes the reversible reaction in which hydroxymethyl group from 5,10-methylenetetrahydrofolate is transferred onto alpha-ketoisovalerate to form ketopantoate. The polypeptide is 3-methyl-2-oxobutanoate hydroxymethyltransferase (Synechococcus sp. (strain CC9311)).